Here is a 428-residue protein sequence, read N- to C-terminus: Enolase (428 aa).

Gln165 contributes to the (2R)-2-phosphoglycerate binding site. Residue Glu207 is the Proton donor of the active site. Residues Asp244, Glu283, and Asp310 each contribute to the Mg(2+) site. Residues Lys335, Arg364, Ser365, and Lys386 each coordinate (2R)-2-phosphoglycerate. Residue Lys335 is the Proton acceptor of the active site.

It belongs to the enolase family. Mg(2+) serves as cofactor.

It localises to the cytoplasm. Its subcellular location is the secreted. It is found in the cell surface. The enzyme catalyses (2R)-2-phosphoglycerate = phosphoenolpyruvate + H2O. Its pathway is carbohydrate degradation; glycolysis; pyruvate from D-glyceraldehyde 3-phosphate: step 4/5. Catalyzes the reversible conversion of 2-phosphoglycerate (2-PG) into phosphoenolpyruvate (PEP). It is essential for the degradation of carbohydrates via glycolysis. This is Enolase from Chlamydia pneumoniae (Chlamydophila pneumoniae).